The primary structure comprises 34 residues: uncharacterized protein (34 aa).

A helical transmembrane segment spans residues 10–30; sequence LIITSSFFAIAAVLVLSVLLI.

It is found in the membrane. This is an uncharacterized protein from Escherichia coli O6:H1 (strain CFT073 / ATCC 700928 / UPEC).